A 461-amino-acid chain; its full sequence is Nuclear distribution protein PAC1 (461 aa).

In terms of domain architecture, LisH spans 9 to 41; it reads QAEELHKSIIAYLTANNLLNTANTLRAELNLSE. 7 WD repeats span residues 114–155, 157–197, 201–248, 251–290, 312–355, 357–396, and 401–457; these read SHRD…RTIK, HTRA…KNIR, GHDH…CVRT, GHTA…PESK, QYLS…LMTL, GHDN…KCIK, and AHER…MKLR.

The protein belongs to the WD repeat LIS1/nudF family. As to quaternary structure, self-associates. Interacts with NDL1 and dynein.

It localises to the cytoplasm. The protein localises to the cytoskeleton. It is found in the spindle pole. Its function is as follows. Positively regulates the activity of the minus-end directed microtubule motor protein dynein. May enhance dynein-mediated microtubule sliding by targeting dynein to the microtubule plus end. Required for nuclear migration during vegetative growth as well as development. Required for retrograde early endosome (EE) transport from the hyphal tip. Required for localization of dynein to the mitotic spindle poles. Recruits additional proteins to the dynein complex at SPBs. This chain is Nuclear distribution protein PAC1, found in Arthroderma otae (strain ATCC MYA-4605 / CBS 113480) (Microsporum canis).